The primary structure comprises 239 residues: Ubiquinone biosynthesis O-methyltransferase (239 aa).

Residues arginine 44, glycine 63, aspartate 84, and methionine 128 each coordinate S-adenosyl-L-methionine.

This sequence belongs to the methyltransferase superfamily. UbiG/COQ3 family.

It catalyses the reaction a 3-demethylubiquinol + S-adenosyl-L-methionine = a ubiquinol + S-adenosyl-L-homocysteine + H(+). The enzyme catalyses a 3-(all-trans-polyprenyl)benzene-1,2-diol + S-adenosyl-L-methionine = a 2-methoxy-6-(all-trans-polyprenyl)phenol + S-adenosyl-L-homocysteine + H(+). It participates in cofactor biosynthesis; ubiquinone biosynthesis. Functionally, O-methyltransferase that catalyzes the 2 O-methylation steps in the ubiquinone biosynthetic pathway. This is Ubiquinone biosynthesis O-methyltransferase from Xanthomonas campestris pv. campestris (strain 8004).